The chain runs to 1331 residues: Receptor-type adenylate cyclase B (1331 aa).

Over M1–R33 the chain is Cytoplasmic. Residues L34–V54 form a helical membrane-spanning segment. Over P55–G898 the chain is Extracellular. Residues N255, N429, N558, N574, and N657 are each glycosylated (N-linked (GlcNAc...) asparagine). The chain crosses the membrane as a helical span at residues G899 to L919. At Y920–H1331 the chain is on the cytoplasmic side. Positions T940–E1094 constitute a Guanylate cyclase domain. 2 residues coordinate Mg(2+): D945 and D988.

Belongs to the adenylyl cyclase class-3 family. The cofactor is Mg(2+).

It is found in the membrane. It catalyses the reaction ATP = 3',5'-cyclic AMP + diphosphate. Could act as a receptor for an unknown ligand. The protein is Receptor-type adenylate cyclase B (RAC-B) of Leishmania donovani.